The following is an 84-amino-acid chain: U21-theraphotoxin-Cg1a 1 (84 aa).

An N-terminal signal peptide occupies residues 1-21; sequence MKVSVLITLAVLGVMFLLTSA. A propeptide spanning residues 22-47 is cleaved from the precursor; that stretch reads EERGSDQMDSPAWLKSMEIIFQSEER. 3 cysteine pairs are disulfide-bonded: C49-C63, C56-C68, and C62-C76. V82 carries the post-translational modification Valine amide.

This sequence belongs to the neurotoxin 10 (Hwtx-1) family. 05 (F4a) subfamily. As to expression, expressed by the venom gland.

The protein localises to the secreted. Functionally, probable ion channel inhibitor. This Chilobrachys guangxiensis (Chinese earth tiger tarantula) protein is U21-theraphotoxin-Cg1a 1.